An 80-amino-acid chain; its full sequence is Conotoxin PnMKLT1-0121 (80 aa).

The first 22 residues, 1-22 (MKLTCMMIVAVLFLTAWTFATA), serve as a signal peptide directing secretion. Positions 23 to 49 (DDPRNRLENFFSKTQHEMKNPEASKLN) are excised as a propeptide. 3 cysteine pairs are disulfide-bonded: Cys52–Cys67, Cys59–Cys71, and Cys66–Cys75.

Belongs to the conotoxin O1 superfamily. Expressed by the venom duct.

It localises to the secreted. This is Conotoxin PnMKLT1-0121 from Conus pennaceus (Feathered cone).